Reading from the N-terminus, the 182-residue chain is Orotate phosphoribosyltransferase (182 aa).

5-phospho-alpha-D-ribose 1-diphosphate is bound by residues R96, K97, K100, H102, and 122 to 130 (EDTSTTGGS). Positions 126 and 154 each coordinate orotate.

It belongs to the purine/pyrimidine phosphoribosyltransferase family. PyrE subfamily. Homodimer. Mg(2+) serves as cofactor.

It catalyses the reaction orotidine 5'-phosphate + diphosphate = orotate + 5-phospho-alpha-D-ribose 1-diphosphate. It participates in pyrimidine metabolism; UMP biosynthesis via de novo pathway; UMP from orotate: step 1/2. Catalyzes the transfer of a ribosyl phosphate group from 5-phosphoribose 1-diphosphate to orotate, leading to the formation of orotidine monophosphate (OMP). This chain is Orotate phosphoribosyltransferase, found in Streptomyces coelicolor (strain ATCC BAA-471 / A3(2) / M145).